Here is a 157-residue protein sequence, read N- to C-terminus: Transcription elongation factor GreA (157 aa).

Residues 10–76 (THEGKQKLEQ…TLENMIRNAK (67 aa)) adopt a coiled-coil conformation.

It belongs to the GreA/GreB family.

In terms of biological role, necessary for efficient RNA polymerase transcription elongation past template-encoded arresting sites. The arresting sites in DNA have the property of trapping a certain fraction of elongating RNA polymerases that pass through, resulting in locked ternary complexes. Cleavage of the nascent transcript by cleavage factors such as GreA or GreB allows the resumption of elongation from the new 3'terminus. GreA releases sequences of 2 to 3 nucleotides. The chain is Transcription elongation factor GreA from Bacillus velezensis (strain DSM 23117 / BGSC 10A6 / LMG 26770 / FZB42) (Bacillus amyloliquefaciens subsp. plantarum).